The sequence spans 330 residues: ADP-L-glycero-D-manno-heptose-6-epimerase (330 aa).

NADP(+) is bound by residues 11–12, 32–33, Gln39, Gln54, 75–79, and Asn92; these read FI, DD, and QGACA. Residue Tyr139 is the Proton acceptor of the active site. Lys143 lines the NADP(+) pocket. Asn168 contacts substrate. Val169 and Lys177 together coordinate NADP(+). Lys177 serves as the catalytic Proton acceptor. Substrate-binding positions include Arg179, His186, 200–203, Arg213, and Tyr292; that span reads FGEH.

It belongs to the NAD(P)-dependent epimerase/dehydratase family. HldD subfamily. As to quaternary structure, homopentamer. NADP(+) is required as a cofactor.

The catalysed reaction is ADP-D-glycero-beta-D-manno-heptose = ADP-L-glycero-beta-D-manno-heptose. The protein operates within nucleotide-sugar biosynthesis; ADP-L-glycero-beta-D-manno-heptose biosynthesis; ADP-L-glycero-beta-D-manno-heptose from D-glycero-beta-D-manno-heptose 7-phosphate: step 4/4. Catalyzes the interconversion between ADP-D-glycero-beta-D-manno-heptose and ADP-L-glycero-beta-D-manno-heptose via an epimerization at carbon 6 of the heptose. The sequence is that of ADP-L-glycero-D-manno-heptose-6-epimerase from Pseudomonas aeruginosa (strain UCBPP-PA14).